A 118-amino-acid chain; its full sequence is Holo-[acyl-carrier-protein] synthase (118 aa).

2 residues coordinate Mg(2+): Asp-8 and Glu-57.

Belongs to the P-Pant transferase superfamily. AcpS family. Mg(2+) is required as a cofactor.

The protein resides in the cytoplasm. The catalysed reaction is apo-[ACP] + CoA = holo-[ACP] + adenosine 3',5'-bisphosphate + H(+). In terms of biological role, transfers the 4'-phosphopantetheine moiety from coenzyme A to a Ser of acyl-carrier-protein. This chain is Holo-[acyl-carrier-protein] synthase, found in Pediococcus pentosaceus (strain ATCC 25745 / CCUG 21536 / LMG 10740 / 183-1w).